A 232-amino-acid polypeptide reads, in one-letter code: Probable thiopurine S-methyltransferase (232 aa).

Residues 14–25, leucine 54, glutamate 75, and arginine 137 contribute to the S-adenosyl-L-methionine site; that span reads WENRWQEGRTGF. Phenylalanine 25 is a substrate binding site.

This sequence belongs to the class I-like SAM-binding methyltransferase superfamily. TPMT family.

Its subcellular location is the cytoplasm. It carries out the reaction S-adenosyl-L-methionine + a thiopurine = S-adenosyl-L-homocysteine + a thiopurine S-methylether.. The chain is Probable thiopurine S-methyltransferase (tpmt) from Danio rerio (Zebrafish).